The sequence spans 358 residues: Putative zinc metalloprotease BH06270 (358 aa).

H7 serves as a coordination point for Zn(2+). The active site involves E8. H11 contacts Zn(2+). 3 helical membrane-spanning segments follow: residues 89 to 111, 282 to 304, and 332 to 354; these read ATVFAGPLFNVLFTVVILTFFFF, FLSLLNFTAFLSIGVGLINLFPI, and IIFRLGLCFVLLFMFFALFNDYF. Positions 102–177 constitute a PDZ domain; the sequence is TVVILTFFFF…IEFKMERSGQ (76 aa).

Belongs to the peptidase M50B family. Zn(2+) serves as cofactor.

The protein localises to the cell inner membrane. This Bartonella henselae (strain ATCC 49882 / DSM 28221 / CCUG 30454 / Houston 1) (Rochalimaea henselae) protein is Putative zinc metalloprotease BH06270.